We begin with the raw amino-acid sequence, 171 residues long: Adenine phosphoribosyltransferase (171 aa).

It belongs to the purine/pyrimidine phosphoribosyltransferase family. In terms of assembly, homodimer.

The protein resides in the cytoplasm. It catalyses the reaction AMP + diphosphate = 5-phospho-alpha-D-ribose 1-diphosphate + adenine. It functions in the pathway purine metabolism; AMP biosynthesis via salvage pathway; AMP from adenine: step 1/1. Catalyzes a salvage reaction resulting in the formation of AMP, that is energically less costly than de novo synthesis. The sequence is that of Adenine phosphoribosyltransferase from Ruminiclostridium cellulolyticum (strain ATCC 35319 / DSM 5812 / JCM 6584 / H10) (Clostridium cellulolyticum).